Here is a 359-residue protein sequence, read N- to C-terminus: Methionine import ATP-binding protein MetN (359 aa).

The segment at 1–21 (MSTPASTPAPDGSHQRDHHPG) is disordered. Positions 24-264 (VEFRGVTKVF…PQTTVAQRFV (241 aa)) constitute an ABC transporter domain. Residue 61–68 (GYSGAGKS) participates in ATP binding.

It belongs to the ABC transporter superfamily. Methionine importer (TC 3.A.1.24) family. As to quaternary structure, the complex is composed of two ATP-binding proteins (MetN), two transmembrane proteins (MetI) and a solute-binding protein (MetQ).

The protein resides in the cell membrane. It catalyses the reaction L-methionine(out) + ATP + H2O = L-methionine(in) + ADP + phosphate + H(+). It carries out the reaction D-methionine(out) + ATP + H2O = D-methionine(in) + ADP + phosphate + H(+). Part of the ABC transporter complex MetNIQ involved in methionine import. Responsible for energy coupling to the transport system. This Corynebacterium efficiens (strain DSM 44549 / YS-314 / AJ 12310 / JCM 11189 / NBRC 100395) protein is Methionine import ATP-binding protein MetN.